The sequence spans 388 residues: Mannosyl-3-phosphoglycerate synthase (388 aa).

The protein belongs to the glycosyltransferase 2 family.

It localises to the cytoplasm. It carries out the reaction (2R)-3-phosphoglycerate + GDP-alpha-D-mannose = 2-O-(alpha-D-mannosyl)-3-phosphoglycerate + GDP + H(+). The protein operates within carbohydrate biosynthesis; 2-(alpha-D-mannosyl)-D-glycerate biosynthesis; 2-(alpha-D-mannosyl)-D-glycerate from GDP-alpha-D-mannose (MPG route): step 1/2. Transfers a mannosyl group from GDP-mannose to phosphoglycerate to form mannosyl-3-phosphoglycerate (MPG). The sequence is that of Mannosyl-3-phosphoglycerate synthase (mngA) from Aeropyrum pernix (strain ATCC 700893 / DSM 11879 / JCM 9820 / NBRC 100138 / K1).